The sequence spans 93 residues: YcgL domain-containing protein KPK_1976 (93 aa).

A YcgL domain is found at 1–85 (MFCVIYRSTK…PSENLLKKHL (85 aa)).

This is YcgL domain-containing protein KPK_1976 from Klebsiella pneumoniae (strain 342).